A 379-amino-acid chain; its full sequence is Pre-mRNA-processing protein 45 (379 aa).

Positions 1 to 10 are enriched in pro residues; the sequence is MFSNRLPPPK. 2 disordered regions span residues 1–22 and 353–379; these read MFSN…ALSS and SEGA…NYGA. Residues 368 to 379 are compositionally biased toward basic and acidic residues; it reads AESDDKSDNYGA.

The protein belongs to the SNW family. As to quaternary structure, belongs to the CWC complex (or CEF1-associated complex), a spliceosome sub-complex reminiscent of a late-stage spliceosome composed of the U2, U5 and U6 snRNAs and at least BUD13, BUD31, BRR2, CDC40, CEF1, CLF1, CUS1, CWC2, CWC15, CWC21, CWC22, CWC23, CWC24, CWC25, CWC27, ECM2, HSH155, IST3, ISY1, LEA1, MSL1, NTC20, PRP8, PRP9, PRP11, PRP19, PRP21, PRP22, PRP45, PRP46, SLU7, SMB1, SMD1, SMD2, SMD3, SMX2, SMX3, SNT309, SNU114, SPP2, SYF1, SYF2, RSE1 and YJU2. Interacts with CLF1, PRP22 and PRP46. Interacts with SPP382.

It is found in the nucleus. Functionally, involved in pre-mRNA splicing. Associated with the spliceosome throughout the splicing reactions, until after the second catalytic step. The chain is Pre-mRNA-processing protein 45 (PRP45) from Saccharomyces cerevisiae (strain ATCC 204508 / S288c) (Baker's yeast).